A 126-amino-acid polypeptide reads, in one-letter code: Holo-[acyl-carrier-protein] synthase (126 aa).

Mg(2+)-binding residues include D9 and E58.

The protein belongs to the P-Pant transferase superfamily. AcpS family. The cofactor is Mg(2+).

It is found in the cytoplasm. It catalyses the reaction apo-[ACP] + CoA = holo-[ACP] + adenosine 3',5'-bisphosphate + H(+). Functionally, transfers the 4'-phosphopantetheine moiety from coenzyme A to a Ser of acyl-carrier-protein. The chain is Holo-[acyl-carrier-protein] synthase from Vibrio atlanticus (strain LGP32) (Vibrio splendidus (strain Mel32)).